The primary structure comprises 212 residues: MSLFDKKHLVSPADALPGRNTPMPVATLHAVNGHSMTNVPDGMEIAIFAMGCFWGVERLFWQLPGVYSTAAGYTGGYTPNPTYREVCSGETGHAEAVRIVYDPSVISYEQLLQVFWENHDPAQGMRQGNDHGTQYRSAIYPLTPEQDSAARASRERFQAAMIAANDDRPVTTEIANATPFYYAEDDHQQYLHKNPYGYCGIGGIGVCLPPDA.

Residue Cys-52 is part of the active site.

Belongs to the MsrA Met sulfoxide reductase family.

The enzyme catalyses L-methionyl-[protein] + [thioredoxin]-disulfide + H2O = L-methionyl-(S)-S-oxide-[protein] + [thioredoxin]-dithiol. The catalysed reaction is [thioredoxin]-disulfide + L-methionine + H2O = L-methionine (S)-S-oxide + [thioredoxin]-dithiol. Its function is as follows. Has an important function as a repair enzyme for proteins that have been inactivated by oxidation. Catalyzes the reversible oxidation-reduction of methionine sulfoxide in proteins to methionine. This chain is Peptide methionine sulfoxide reductase MsrA, found in Escherichia fergusonii (strain ATCC 35469 / DSM 13698 / CCUG 18766 / IAM 14443 / JCM 21226 / LMG 7866 / NBRC 102419 / NCTC 12128 / CDC 0568-73).